The following is a 436-amino-acid chain: Trigger factor (436 aa).

The PPIase FKBP-type domain occupies 163-248 (GDRVTVDFEG…LKKIEAAHLP (86 aa)).

The protein belongs to the FKBP-type PPIase family. Tig subfamily.

The protein localises to the cytoplasm. The enzyme catalyses [protein]-peptidylproline (omega=180) = [protein]-peptidylproline (omega=0). Its function is as follows. Involved in protein export. Acts as a chaperone by maintaining the newly synthesized protein in an open conformation. Functions as a peptidyl-prolyl cis-trans isomerase. This Albidiferax ferrireducens (strain ATCC BAA-621 / DSM 15236 / T118) (Rhodoferax ferrireducens) protein is Trigger factor.